The following is a 227-amino-acid chain: Apoptosis regulator OPG045 (227 aa).

The protein belongs to the orthopoxvirus OPG045 family. Homodimer. Interacts with host pro-apoptotic protein BCL2L11 (via BH3 domain). Interacts with host NLRP1. Interacts with host BAK.

The protein localises to the host mitochondrion outer membrane. It is found in the host cytoplasm. Its function is as follows. Plays a role in evading host innate immune response by inhibiting host inflammasome activation. Interacts with and inhibits NLR-mediated interleukin-1 beta/IL1B production in infected cells. At the host mitochondria outer membrane, interacts with the BH3 domain of host BAK and prevents BAK from binding active BAX. In turn, host apoptosis is inhibited. This is Apoptosis regulator OPG045 (OPG045) from Oryctolagus cuniculus (Rabbit).